The sequence spans 378 residues: Probable endopolygalacturonase AFUB_016610 (378 aa).

The first 19 residues, 1-19, serve as a signal peptide directing secretion; that stretch reads MLKLMGSLVLLASAAEVIA. Residues 20 to 35 constitute a propeptide that is removed on maturation; sequence SPAAEPVAPSTTLEKR. Cys-38 and Cys-56 are oxidised to a cystine. 3 PbH1 repeats span residues 147–169, 170–200, and 201–222; these read TSSSSITDLHILNTPVQAVSING, CDGLTITDITIDNSAGDTQGGHNTDAFDIGS, and SSNIIISGAKVYNQDDCVAVNS. Asp-215 acts as the Proton donor in catalysis. Cys-217 and Cys-233 are disulfide-bonded. The active site involves His-237. PbH1 repeat units lie at residues 252-273 and 281-303; these read VENVSFTNSQVTNSDNGLRIKA and IKGVTYSGITLSSIRKYGILIEQ. N-linked (GlcNAc...) asparagine glycosylation occurs at Asn-254. An N-linked (GlcNAc...) asparagine glycan is attached at Asn-327. Cys-345 and Cys-350 form a disulfide bridge. Residue Asn-352 is glycosylated (N-linked (GlcNAc...) asparagine). An intrachain disulfide couples Cys-369 to Cys-378.

It belongs to the glycosyl hydrolase 28 family.

It localises to the secreted. The catalysed reaction is (1,4-alpha-D-galacturonosyl)n+m + H2O = (1,4-alpha-D-galacturonosyl)n + (1,4-alpha-D-galacturonosyl)m.. Functionally, involved in maceration and soft-rotting of plant tissue. Hydrolyzes the 1,4-alpha glycosidic bonds of de-esterified pectate in the smooth region of the plant cell wall. The polypeptide is Probable endopolygalacturonase AFUB_016610 (Aspergillus fumigatus (strain CBS 144.89 / FGSC A1163 / CEA10) (Neosartorya fumigata)).